Consider the following 376-residue polypeptide: Spermidine/putrescine import ATP-binding protein PotA (376 aa).

In terms of domain architecture, ABC transporter spans 6–236 (INIVNVNKSF…PADTFVADFL (231 aa)). An ATP-binding site is contributed by 38 to 45 (GPSGCGKT).

The protein belongs to the ABC transporter superfamily. Spermidine/putrescine importer (TC 3.A.1.11.1) family. The complex is composed of two ATP-binding proteins (PotA), two transmembrane proteins (PotB and PotC) and a solute-binding protein (PotD).

The protein resides in the cell inner membrane. It carries out the reaction ATP + H2O + polyamine-[polyamine-binding protein]Side 1 = ADP + phosphate + polyamineSide 2 + [polyamine-binding protein]Side 1.. In terms of biological role, part of the ABC transporter complex PotABCD involved in spermidine/putrescine import. Responsible for energy coupling to the transport system. The protein is Spermidine/putrescine import ATP-binding protein PotA of Fusobacterium nucleatum subsp. nucleatum (strain ATCC 25586 / DSM 15643 / BCRC 10681 / CIP 101130 / JCM 8532 / KCTC 2640 / LMG 13131 / VPI 4355).